Consider the following 88-residue polypeptide: UPF0297 protein SGO_2042 (88 aa).

Belongs to the UPF0297 family.

This Streptococcus gordonii (strain Challis / ATCC 35105 / BCRC 15272 / CH1 / DL1 / V288) protein is UPF0297 protein SGO_2042.